The chain runs to 187 residues: Large ribosomal subunit protein uL22 (187 aa).

The disordered stretch occupies residues 161-187 (APTDDAPAKKKLSKKKLARQKEKMMRE). Positions 169–178 (KKKLSKKKLA) are enriched in basic residues.

Belongs to the universal ribosomal protein uL22 family.

The protein is Large ribosomal subunit protein uL22 (RpL17) of Bombyx mori (Silk moth).